Consider the following 341-residue polypeptide: MKAYKLLTTASIGALMLGMSTAAYSDNWRYAHEEYEGDVQDVFAQAFKGYVEDNSDHTVQVYRFGELGESDDIMEQTQNGILQFVNQSPGFTGSLIPSAQIFFIPYLMPTDMDTVLEFFDESKAINEMFPKLYAEHGLELLKMYPEGEMVVTADEPITSPEDFDNKKIRTMTNPLLAETYKAFGATPTPLPWGEVYGGLQTGIIDGQENPIFWIESGGLYEVSPNLTFTSHGWFTTAMMANQDFYEGLSEEDQQLVQDAADAAYDHTIEHIKGLSEESLEKIKAASDEVTVTRLNDEQIQAFKERAPQVEEKFIEMTGEQGQELLDQFKADLKAVQSESEG.

The N-terminal stretch at 1–25 is a signal peptide; that stretch reads MKAYKLLTTASIGALMLGMSTAAYS. L-ectoine contacts are provided by Glu-34, Arg-169, Asn-209, Trp-213, and Phe-234.

Belongs to the bacterial solute-binding protein 7 family. Monomer. The complex comprises the extracytoplasmic solute receptor protein TeaA, and the two transmembrane proteins TeaB and TeaC.

It localises to the periplasm. Part of the tripartite ATP-independent periplasmic (TRAP) transport system TeaABC involved in the uptake of ectoine and hydroxyectoine in response to osmotic upshock. Probably functions as a recovery system for synthesized ectoine that leaks out of the cell. Binds ectoine with high affinity. Affinity for hydroxyectoine is approximately 20-fold lower. The chain is Ectoine-binding periplasmic protein TeaA (teaA) from Halomonas elongata (strain ATCC 33173 / DSM 2581 / NBRC 15536 / NCIMB 2198 / 1H9).